Here is a 181-residue protein sequence, read N- to C-terminus: MICGIDEVGRGCIFGPILSAAVVFKKKPNFIKELDDSKKLTKEKREYLSSLILENSYYAFGEISNITIEKINIHNASLLAMQTAYENLKLNCNLVFIDGKFVPKISAKNVKAIIKGDSIIDEIKAASIIAKVKRDKLMDEYDKIYPLYLLKKNKGYPTKEHKNAIKKYGVLSLHRKNFKLI.

Positions 1-181 (MICGIDEVGR…SLHRKNFKLI (181 aa)) constitute an RNase H type-2 domain. Residues Asp6, Glu7, and Asp98 each contribute to the a divalent metal cation site.

Belongs to the RNase HII family. Mn(2+) serves as cofactor. Mg(2+) is required as a cofactor.

It is found in the cytoplasm. The enzyme catalyses Endonucleolytic cleavage to 5'-phosphomonoester.. Endonuclease that specifically degrades the RNA of RNA-DNA hybrids. The sequence is that of Ribonuclease HII from Borreliella afzelii (strain PKo) (Borrelia afzelii).